The following is a 303-amino-acid chain: Sulfotransferase 6B1 (303 aa).

65–70 (KCGSNW) contacts 3'-phosphoadenylyl sulfate. Residue His-118 is the Proton acceptor of the active site. Residues Arg-140, Ser-148, Tyr-203, 237–242 (STFLAM), and 259–261 (RKG) contribute to the 3'-phosphoadenylyl sulfate site.

Belongs to the sulfotransferase 1 family. Expressed in brain, heart, kidney, thymus, lung, liver and testis.

The protein resides in the cytoplasm. The protein localises to the cytosol. It carries out the reaction thyroxine + 3'-phosphoadenylyl sulfate = thyroxine sulfate + adenosine 3',5'-bisphosphate + H(+). In terms of biological role, sulfotransferase that utilizes 3'-phospho-5'-adenylyl sulfate (PAPS) as sulfonate donor to catalyze the sulfate conjugation of thyroxine. Involved in the metabolism of thyroxine. The protein is Sulfotransferase 6B1 (Sult6b1) of Mus musculus (Mouse).